A 360-amino-acid chain; its full sequence is NAD(P)H-quinone oxidoreductase subunit 1, chloroplastic (360 aa).

A run of 9 helical transmembrane segments spans residues I27–I47, F98–F118, I129–G149, A165–L185, F203–L223, Y248–S268, L269–L289, I297–I317, and F340–L360.

The protein belongs to the complex I subunit 1 family. In terms of assembly, NDH is composed of at least 16 different subunits, 5 of which are encoded in the nucleus.

The protein resides in the plastid. It localises to the chloroplast thylakoid membrane. It carries out the reaction a plastoquinone + NADH + (n+1) H(+)(in) = a plastoquinol + NAD(+) + n H(+)(out). The catalysed reaction is a plastoquinone + NADPH + (n+1) H(+)(in) = a plastoquinol + NADP(+) + n H(+)(out). Functionally, NDH shuttles electrons from NAD(P)H:plastoquinone, via FMN and iron-sulfur (Fe-S) centers, to quinones in the photosynthetic chain and possibly in a chloroplast respiratory chain. The immediate electron acceptor for the enzyme in this species is believed to be plastoquinone. Couples the redox reaction to proton translocation, and thus conserves the redox energy in a proton gradient. The protein is NAD(P)H-quinone oxidoreductase subunit 1, chloroplastic of Olimarabidopsis pumila (Dwarf rocket).